The following is a 450-amino-acid chain: Plasmepsin VII (450 aa).

A signal peptide spans methionine 1 to leucine 24. A Peptidase A1 domain is found at tyrosine 92–valine 441. Active-site residues include aspartate 111 and aspartate 324.

It belongs to the peptidase A1 family.

It localises to the cytoplasm. The protein is Plasmepsin VII of Plasmodium falciparum (isolate NF54).